We begin with the raw amino-acid sequence, 292 residues long: NAD kinase (292 aa).

The active-site Proton acceptor is aspartate 73. NAD(+) contacts are provided by residues aspartate 73–glycine 74, asparagine 147–glutamate 148, histidine 158, arginine 175, aspartate 177, threonine 188–serine 193, and glutamine 247.

The protein belongs to the NAD kinase family. A divalent metal cation is required as a cofactor.

Its subcellular location is the cytoplasm. It carries out the reaction NAD(+) + ATP = ADP + NADP(+) + H(+). Involved in the regulation of the intracellular balance of NAD and NADP, and is a key enzyme in the biosynthesis of NADP. Catalyzes specifically the phosphorylation on 2'-hydroxyl of the adenosine moiety of NAD to yield NADP. This is NAD kinase from Escherichia coli O157:H7.